Here is a 702-residue protein sequence, read N- to C-terminus: Polyribonucleotide nucleotidyltransferase 1 (702 aa).

Residues Asp-483 and Asp-489 each coordinate Mg(2+). The KH domain maps to 550-609; it reads PQVTKLKVHPDKVREVIGAGGKVINKIIDETGVKINIENDGTIYIAAPDQESARVALEMI. Residues 619-687 form the S1 motif domain; sequence GEVYTGKVIK…PQGKIGLSRK (69 aa).

This sequence belongs to the polyribonucleotide nucleotidyltransferase family. Mg(2+) serves as cofactor.

The protein localises to the cytoplasm. The catalysed reaction is RNA(n+1) + phosphate = RNA(n) + a ribonucleoside 5'-diphosphate. In terms of biological role, involved in mRNA degradation. Catalyzes the phosphorolysis of single-stranded polyribonucleotides processively in the 3'- to 5'-direction. In Alkaliphilus metalliredigens (strain QYMF), this protein is Polyribonucleotide nucleotidyltransferase 1.